Consider the following 337-residue polypeptide: RNA 3'-terminal phosphate cyclase (337 aa).

ATP is bound by residues Gln101 and His282–Asp285. Catalysis depends on His306, which acts as the Tele-AMP-histidine intermediate.

This sequence belongs to the RNA 3'-terminal cyclase family. Type 1 subfamily.

Its subcellular location is the cytoplasm. The enzyme catalyses a 3'-end 3'-phospho-ribonucleotide-RNA + ATP = a 3'-end 2',3'-cyclophospho-ribonucleotide-RNA + AMP + diphosphate. Functionally, catalyzes the conversion of 3'-phosphate to a 2',3'-cyclic phosphodiester at the end of RNA. The mechanism of action of the enzyme occurs in 3 steps: (A) adenylation of the enzyme by ATP; (B) transfer of adenylate to an RNA-N3'P to produce RNA-N3'PP5'A; (C) and attack of the adjacent 2'-hydroxyl on the 3'-phosphorus in the diester linkage to produce the cyclic end product. The biological role of this enzyme is unknown but it is likely to function in some aspects of cellular RNA processing. This Saccharolobus islandicus (strain M.16.27) (Sulfolobus islandicus) protein is RNA 3'-terminal phosphate cyclase.